A 491-amino-acid chain; its full sequence is 2,3-bisphosphoglycerate-independent phosphoglycerate mutase (491 aa).

The Mn(2+) site is built by D11 and S61. The active-site Phosphoserine intermediate is the S61. Substrate contacts are provided by residues H118, 147–148, R177, R183, 247–250, and K320; these read RD and RNDR. Mn(2+) contacts are provided by D386, H390, D427, H428, and H445.

It belongs to the BPG-independent phosphoglycerate mutase family. As to quaternary structure, monomer. Mn(2+) is required as a cofactor.

It carries out the reaction (2R)-2-phosphoglycerate = (2R)-3-phosphoglycerate. The protein operates within carbohydrate degradation; glycolysis; pyruvate from D-glyceraldehyde 3-phosphate: step 3/5. Functionally, catalyzes the interconversion of 2-phosphoglycerate and 3-phosphoglycerate. This chain is 2,3-bisphosphoglycerate-independent phosphoglycerate mutase, found in Helicobacter pylori (strain J99 / ATCC 700824) (Campylobacter pylori J99).